Reading from the N-terminus, the 152-residue chain is Endoribonuclease YbeY (152 aa).

Zn(2+)-binding residues include His-112, His-116, and His-122.

Belongs to the endoribonuclease YbeY family. Requires Zn(2+) as cofactor.

It is found in the cytoplasm. Its function is as follows. Single strand-specific metallo-endoribonuclease involved in late-stage 70S ribosome quality control and in maturation of the 3' terminus of the 16S rRNA. This is Endoribonuclease YbeY from Pseudoalteromonas translucida (strain TAC 125).